The chain runs to 375 residues: Paralyzed arrest at two-fold protein 6 (375 aa).

The tract at residues 1–51 (MSTLGRSKTPSRDEPKKPGVFEKLSGTLSRKKKAPEDEHGNQGGAHHATDE) is disordered. Residues 10-20 (PSRDEPKKPGV) show a composition bias toward basic and acidic residues. Calponin-homology (CH) domains are found at residues 99–206 (AQVV…LHYR) and 266–373 (AHVK…TKYK).

It belongs to the parvin family. As to quaternary structure, may interact (via calponin-homology (CH) 2 domain) with pat-4 (via kinase domain). May form a complex with unc-112 and pat-4. Component of an integrin containing attachment complex, composed of at least pat-2, pat-3, pat-4, pat-6, unc-52, unc-97 and unc-112. Expressed from 1.5 stage embryos, mostly within the muscle cells. In adult hermaphrodites, expressed in the attachments of other muscles, including the uterine, anal depressor, anal sphincter, and vulval muscles, as well as in the spermatheca and the distal tip cells. Expressed in mechanosensory receptor neurons ALML/R, PLML/R, AVM, and PVM. Localizes at body wall muscle attachments.

Its subcellular location is the cytoplasm. It is found in the cytoskeleton. The protein resides in the myofibril. The protein localises to the sarcomere. It localises to the m line. Its subcellular location is the perikaryon. It is found in the cell projection. The protein resides in the axon. Involved in the regulation of cell adhesion and cytoskeleton organization. Component of an integrin containing attachment complex, which is required for muscle development and maintenance. During embryonic development, required to recruit cpna-1, unc-89 and myofilaments to newly forming integrin attachments composed of integrins pat-2/pat-3, pat-4 and unc-112. Also required to reposition the integrin-based attachments so that they form the highly ordered array of dense body and M-line attachments that are characteristic of mature muscle cells. During the formation of neuromuscular junctions at the larval stage, negatively regulates membrane protrusion from body wall muscles. In Caenorhabditis elegans, this protein is Paralyzed arrest at two-fold protein 6.